The chain runs to 355 residues: Nuclear hormone receptor family member nhr-127 (355 aa).

A DNA-binding region (nuclear receptor) is located at residues S10–K86. 2 consecutive NR C4-type zinc fingers follow at residues C13–C33 and C49–C69. The 230-residue stretch at N126–Y355 folds into the NR LBD domain.

It belongs to the nuclear hormone receptor family.

The protein resides in the nucleus. Its function is as follows. Orphan nuclear receptor. May play a role in modulation of lifespan and immunity. The protein is Nuclear hormone receptor family member nhr-127 (nhr-127) of Caenorhabditis elegans.